Reading from the N-terminus, the 363-residue chain is Heme A synthase (363 aa).

The next 8 helical transmembrane spans lie at 21–41, 107–127, 138–158, 174–194, 207–227, 268–288, 301–321, and 323–343; these read ALVR…VLVG, RLLA…FWVS, LVGI…MVAS, HLTL…GLAP, LAGF…LVAG, FVHR…MIAT, ATLL…TLLM, and VPLH…GFAA. H270 contacts heme. H331 lines the heme pocket.

This sequence belongs to the COX15/CtaA family. Type 2 subfamily. Interacts with CtaB. Requires heme b as cofactor.

It is found in the cell membrane. The catalysed reaction is Fe(II)-heme o + 2 A + H2O = Fe(II)-heme a + 2 AH2. It functions in the pathway porphyrin-containing compound metabolism; heme A biosynthesis; heme A from heme O: step 1/1. Its function is as follows. Catalyzes the conversion of heme O to heme A by two successive hydroxylations of the methyl group at C8. The first hydroxylation forms heme I, the second hydroxylation results in an unstable dihydroxymethyl group, which spontaneously dehydrates, resulting in the formyl group of heme A. The chain is Heme A synthase from Mesorhizobium japonicum (strain LMG 29417 / CECT 9101 / MAFF 303099) (Mesorhizobium loti (strain MAFF 303099)).